Reading from the N-terminus, the 437-residue chain is F-box only protein 9 (437 aa).

Residues 1-29 (MAEAEEDCHSEAVREGDDDDENESPAETD) form a disordered region. Positions 16–26 (GDDDDENESPA) are enriched in acidic residues. The stretch at 84 to 117 (ARELFLKAVEEEQNGALYEAIKFYRRAMQLVPDI) is one TPR repeat. Ser126 is modified (phosphoserine). The region spanning 175 to 226 (QTHISALPMEVLMYVFRWVVSSDLDLRSLEQLSQVCRGFYICARDPEIWRLA) is the F-box domain.

Part of the SCF (SKP1-CUL1-F-box) E3 ubiquitin-protein ligase complex SCF(FBXO9) composed of CUL1, SKP1, RBX1 and FBXO9. Interacts with TTI1 and TELO2; when TTI1 and TELO2 are phosphorylated by CK2.

It localises to the cytoplasm. It functions in the pathway protein modification; protein ubiquitination. Substrate recognition component of a SCF (SKP1-CUL1-F-box protein) E3 ubiquitin-protein ligase complex which mediates the ubiquitination and subsequent proteasomal degradation of target proteins and plays a role in several biological processes such as cell cycle, cell proliferation, or maintenance of chromosome stability. Ubiquitinates mTORC1-bound TTI1 and TELO2 when they are phosphorylated by CK2 following growth factor deprivation, leading to their degradation. In contrast, does not mediate ubiquitination of TTI1 and TELO2 when they are part of the mTORC2 complex. As a consequence, mTORC1 is inactivated to restrain cell growth and protein translation, while mTORC2 is the activated due to the relief of feedback inhibition by mTORC1. Plays a role in maintaining epithelial cell survival by regulating the turn-over of chromatin modulator PRMT4 through ubiquitination and degradation by the proteasomal pathway. Also regulates PPARgamma stability by facilitating PPARgamma/PPARG ubiquitination and thereby plays a role in adipocyte differentiation. The sequence is that of F-box only protein 9 (FBXO9) from Bos taurus (Bovine).